Consider the following 380-residue polypeptide: Alcohol dehydrogenase 3 (380 aa).

The Zn(2+) site is built by cysteine 48, threonine 50, histidine 70, cysteine 100, cysteine 103, cysteine 106, cysteine 114, and cysteine 178. Residues threonine 50 and histidine 70 each contribute to the an alcohol site. Threonine 50 is an NAD(+) binding site. Residues 203 to 208 (GLGAVG), aspartate 227, arginine 232, threonine 273, valine 296, 296 to 298 (VGV), phenylalanine 323, and arginine 373 contribute to the NAD(+) site.

Belongs to the zinc-containing alcohol dehydrogenase family. In terms of assembly, homodimer. Homotetramer. The cofactor is Zn(2+).

Its subcellular location is the cytoplasm. The enzyme catalyses a primary alcohol + NAD(+) = an aldehyde + NADH + H(+). It catalyses the reaction a secondary alcohol + NAD(+) = a ketone + NADH + H(+). The protein is Alcohol dehydrogenase 3 (ADH3) of Solanum tuberosum (Potato).